Consider the following 262-residue polypeptide: High-affinity zinc uptake system membrane protein ZnuB (262 aa).

7 helical membrane-spanning segments follow: residues 8-28 (GWLA…FIVW), 54-74 (INSF…LAWL), 84-104 (TVLN…ISLI), 129-149 (ITIS…WHSI), 179-199 (FTIA…LLII), 215-235 (VIIA…LSVF), and 238-254 (TPAS…LCLI).

It belongs to the ABC-3 integral membrane protein family.

It localises to the cell membrane. Its function is as follows. Involved in the high-affinity zinc uptake transport system. The polypeptide is High-affinity zinc uptake system membrane protein ZnuB (znuB) (Buchnera aphidicola subsp. Acyrthosiphon pisum (strain APS) (Acyrthosiphon pisum symbiotic bacterium)).